A 296-amino-acid chain; its full sequence is 33 kDa chaperonin (296 aa).

2 cysteine pairs are disulfide-bonded: C233-C235 and C267-C270.

The protein belongs to the HSP33 family. Post-translationally, under oxidizing conditions two disulfide bonds are formed involving the reactive cysteines. Under reducing conditions zinc is bound to the reactive cysteines and the protein is inactive.

The protein localises to the cytoplasm. Its function is as follows. Redox regulated molecular chaperone. Protects both thermally unfolding and oxidatively damaged proteins from irreversible aggregation. Plays an important role in the bacterial defense system toward oxidative stress. This Actinobacillus pleuropneumoniae serotype 5b (strain L20) protein is 33 kDa chaperonin.